The following is a 291-amino-acid chain: MTKAELVKELRIRTQASMSECIKALDASENDIEKAIVWLRENGAIKAANKLKNAATDGVVLAKKINNKAILIEVNCQTDFVAKNENFLAYANQILEEALAKVENKEDFDKLIINGKPIAESGLDLTAYIGEKIVFRRGEILKANDDQTLGVYTHNNNRVAAIILVDGKVEDEVVRNVAMHAAAMRPRYLNEKVVDKLWLAKEREIIVNQLEHEGKPAAFAAKIIDGRLNKILKENCLVDQSYFKQPELTIEKYLKNNNAVAVGYFSYEVGEGIEKAPQMSFADEVAAQMKK.

The segment at 78–81 is involved in Mg(2+) ion dislocation from EF-Tu; it reads TDFV.

Belongs to the EF-Ts family.

The protein localises to the cytoplasm. Associates with the EF-Tu.GDP complex and induces the exchange of GDP to GTP. It remains bound to the aminoacyl-tRNA.EF-Tu.GTP complex up to the GTP hydrolysis stage on the ribosome. The protein is Elongation factor Ts of Ureaplasma parvum serovar 3 (strain ATCC 27815 / 27 / NCTC 11736).